Consider the following 149-residue polypeptide: UPF0251 protein Moth_1655 (149 aa).

The tract at residues 129–149 (AGRGPGRGRCHRHGRFGEGEH) is disordered.

The protein belongs to the UPF0251 family.

The sequence is that of UPF0251 protein Moth_1655 from Moorella thermoacetica (strain ATCC 39073 / JCM 9320).